The following is a 315-amino-acid chain: Intradiol ring-cleavage dioxygenase prcA (315 aa).

Positions 166, 200, 224, and 226 each coordinate Fe cation. Residues 287-315 (KKHHPNPNSAPPVSSFERFNKASKTQEKL) form a disordered region. Over residues 304–315 (RFNKASKTQEKL) the composition is skewed to basic and acidic residues.

Belongs to the intradiol ring-cleavage dioxygenase family. Homodimer. Fe(3+) is required as a cofactor.

The enzyme catalyses 3,4-dihydroxybenzoate + O2 = 3-carboxy-cis,cis-muconate + 2 H(+). Functionally, intradiol ring-cleavage dioxygenase; part of the benzoic acid degradation pathway also known as the protocatechuic acid pathway. Benzoic acid debradation begins with the conversion of benzoic acid into 4-hydroxybenzoic acid through hydroxylation by the benzoate-4-monooxygenase bphA, and its partner NADPH-cytochrome P450 reductase cprA which act as a mediator in electron donation from NADPH. 4-Hydroxybenzoic acid is then converted into 3,4-dihydroxybenzoic acid (also called protocatechuic acid) by the p-hydroxybenzoate-m-hydroxylase phhA. Protocatechuic acid is converted into 3-carboxy-cis,cis-muconic acid by the intradiol ring-cleavage dioxygenase prcA, which is further metabolized through the 3-oxoadipate pathway to finally enter the tricarboxylic acid cycle (TCA). This is Intradiol ring-cleavage dioxygenase prcA from Aspergillus niger (strain ATCC MYA-4892 / CBS 513.88 / FGSC A1513).